The sequence spans 287 residues: Glucose import system permease protein GlcU (287 aa).

7 helical membrane-spanning segments follow: residues 14 to 34 (HYLALAIVSVIWLIPVYAMLI), 76 to 96 (IIVIPTSFISAFLGAMGAYFF), 113 to 133 (VLFSLISLATFIPQEATLLPL), 149 to 169 (IIFALLIFYIPTGALLMSMFI), 194 to 214 (IVFPLSMPGFISTLIFIIIQA), 218 to 238 (FFIPLVLVTTPGMKLTSIAVL), and 250 to 270 (DTFAAGMVASIIPLAIFVFLG). The region spanning 71–269 (LINSLIIVIP…IIPLAIFVFL (199 aa)) is the ABC transmembrane type-1 domain.

Belongs to the binding-protein-dependent transport system permease family. In terms of assembly, the complex is composed of two ATP-binding proteins (GlcV), two transmembrane proteins (GlcT and GlcU) and a solute-binding protein (GlcS).

It localises to the cell membrane. Functionally, part of the ABC transporter complex GlcSTUV involved in glucose uptake. Responsible for the translocation of the substrate across the membrane. This Saccharolobus solfataricus (strain ATCC 35092 / DSM 1617 / JCM 11322 / P2) (Sulfolobus solfataricus) protein is Glucose import system permease protein GlcU.